The primary structure comprises 495 residues: Cytochrome P450 monooxygenase BOA4 (495 aa).

A helical membrane pass occupies residues 12–31; sequence LANSNTVIAGCIVFALYYLF. Asparagine 115 is a glycosylation site (N-linked (GlcNAc...) asparagine). Position 439 (cysteine 439) interacts with heme.

It belongs to the cytochrome P450 family. Heme serves as cofactor.

The protein localises to the membrane. It functions in the pathway polyketide biosynthesis. In terms of biological role, cytochrome P450 monooxygenase; part of the gene cluster A that mediates the biosynthesis of botcinic acid and its botcinin derivatives, acetate-derived polyketides that contribute to virulence when combined with the sesquiterpene botrydial. Botcinic acid and its derivatives have been shown to induce chlorosis and necrosis during host plant infection, but also have antifungal activities. Two polyketide synthases, BOA6 and BOA9, are involved in the biosynthesis of botcinins. BOA6 mediates the formation of the per-methylated tetraketide core by condensation of four units of malonyl-CoA with one unit of acetyl-CoA, which would be methylated in activated methylene groups to yield a bicyclic acid intermediate that could then either be converted to botrylactone derivatives or lose the starter acetate unit through a retro-Claisen type C-C bond cleavage to yield botcinin derivatives. The second polyketide synthase, BOA9, is probably required for the biosynthesis of the tetraketide side chain of botcinins. The methyltransferase (MT) domain within BOA6 is probably responsible for the incorporation of four methyl groups. The trans-enoyl reductase BOA5 might take over the enoyl reductase function of BOA6 that misses an ER domain. The monooxygenases BOA2, BOA3 and BOA4 might be involved in further hydroxylations at C4, C5 and C8, whereas BOA7, close to BOA9, could potentially be involved in the hydroxylation at C4 in the side chain of botcinins. This is Cytochrome P450 monooxygenase BOA4 from Botryotinia fuckeliana (strain B05.10) (Noble rot fungus).